The following is a 377-amino-acid chain: Histidinol-phosphate aminotransferase (377 aa).

Lys-230 is subject to N6-(pyridoxal phosphate)lysine.

The protein belongs to the class-II pyridoxal-phosphate-dependent aminotransferase family. Histidinol-phosphate aminotransferase subfamily. As to quaternary structure, homodimer. It depends on pyridoxal 5'-phosphate as a cofactor.

It catalyses the reaction L-histidinol phosphate + 2-oxoglutarate = 3-(imidazol-4-yl)-2-oxopropyl phosphate + L-glutamate. It functions in the pathway amino-acid biosynthesis; L-histidine biosynthesis; L-histidine from 5-phospho-alpha-D-ribose 1-diphosphate: step 7/9. This Mycobacterium leprae (strain Br4923) protein is Histidinol-phosphate aminotransferase.